A 382-amino-acid chain; its full sequence is Apolipoprotein A-IV (382 aa).

An N-terminal signal peptide occupies residues 1–20; sequence MFLKAVVLTLSLVAVTGAQA. 13 consecutive repeat copies span residues 33-54, 60-81, 82-103, 115-136, 137-158, 159-180, 181-202, 203-224, 225-246, 247-268, 269-286, 287-308, and 309-330. Residues 33 to 330 are 13 X 22 AA approximate tandem repeats; that stretch reads DYFSQLSNNA…QVEELRQKLG (298 aa).

The protein belongs to the apolipoprotein A1/A4/E family. As to quaternary structure, homodimer. In terms of processing, phosphorylation sites are present in the extracellular medium.

It localises to the secreted. Its function is as follows. May have a role in chylomicrons and VLDL secretion and catabolism. Required for efficient activation of lipoprotein lipase by ApoC-II; potent activator of LCAT. Apoa-IV is a major component of HDL and chylomicrons. The sequence is that of Apolipoprotein A-IV (APOA4) from Mirounga angustirostris (Northern elephant seal).